A 155-amino-acid chain; its full sequence is Trypsin/factor XIIA inhibitor (155 aa).

Residues 1–28 (MASSSSSSHRRLILAAAVLLSVLAAASA) form the signal peptide. Intrachain disulfides connect cysteine 34-cysteine 83, cysteine 48-cysteine 72, cysteine 57-cysteine 114, cysteine 73-cysteine 132, and cysteine 85-cysteine 143. Arginine 62 is an active-site residue. Positions 139–155 (GVAECPWILGGGTMPSK) are cleaved as a propeptide — C-terminal peptide.

The protein belongs to the protease inhibitor I6 (cereal trypsin/alpha-amylase inhibitor) family. As to quaternary structure, monomer.

It is found in the secreted. Functionally, potent inhibitor of mammalian trypsin and a specific inhibitor of factor XIIa (activated hageman factor). This is Trypsin/factor XIIA inhibitor from Zea mays (Maize).